We begin with the raw amino-acid sequence, 166 residues long: Interleukin-2 (166 aa).

Positions 1 to 20 are cleaved as a signal peptide; sequence MYSMQLASCVTLTLVLLVNS. Thr-23 carries an O-linked (GalNAc...) threonine glycan. The cysteines at positions 89 and 137 are disulfide-linked.

It belongs to the IL-2 family.

The protein resides in the secreted. Functionally, cytokine produced by activated CD4-positive helper T-cells and to a lesser extend activated CD8-positive T-cells and natural killer (NK) cells that plays pivotal roles in the immune response and tolerance. Binds to a receptor complex composed of either the high-affinity trimeric IL-2R (IL2RA/CD25, IL2RB/CD122 and IL2RG/CD132) or the low-affinity dimeric IL-2R (IL2RB and IL2RG). Interaction with the receptor leads to oligomerization and conformation changes in the IL-2R subunits resulting in downstream signaling starting with phosphorylation of JAK1 and JAK3. In turn, JAK1 and JAK3 phosphorylate the receptor to form a docking site leading to the phosphorylation of several substrates including STAT5. This process leads to activation of several pathways including STAT, phosphoinositide-3-kinase/PI3K and mitogen-activated protein kinase/MAPK pathways. Functions as a T-cell growth factor and can increase NK-cell cytolytic activity as well. Promotes strong proliferation of activated B-cells and subsequently immunoglobulin production. Plays a pivotal role in regulating the adaptive immune system by controlling the survival and proliferation of regulatory T-cells, which are required for the maintenance of immune tolerance. Moreover, participates in the differentiation and homeostasis of effector T-cell subsets, including Th1, Th2, Th17 as well as memory CD8-positive T-cells. The chain is Interleukin-2 (Il2) from Mus spretus (Western Mediterranean mouse).